A 183-amino-acid polypeptide reads, in one-letter code: uncharacterized protein (183 aa).

The signal sequence occupies residues 1 to 23; that stretch reads MSAFKKSLLVAGVAMILSNNVFA. A disulfide bridge connects residues C41 and C80.

Belongs to the fimbrial protein family.

The protein localises to the fimbrium. This is an uncharacterized protein from Escherichia coli (strain K12).